We begin with the raw amino-acid sequence, 79 residues long: Small ribosomal subunit protein bS18 (79 aa).

Belongs to the bacterial ribosomal protein bS18 family. In terms of assembly, part of the 30S ribosomal subunit. Forms a tight heterodimer with protein bS6.

Its function is as follows. Binds as a heterodimer with protein bS6 to the central domain of the 16S rRNA, where it helps stabilize the platform of the 30S subunit. The chain is Small ribosomal subunit protein bS18 from Streptococcus pyogenes serotype M5 (strain Manfredo).